Here is a 420-residue protein sequence, read N- to C-terminus: Mannose-1-phosphate guanylyltransferase regulatory subunit alpha (420 aa).

Residues 2-251 are substrate-binding domain; sequence LKAVILIGGP…DGIWSQIKSA (250 aa). The GDP-alpha-D-mannose site is built by glutamate 85 and glutamine 247. The interval 273–420 is hexapeptide repeat domain; sequence LAKHTPGGPW…SRSFTNQIIL (148 aa). The tract at residues 356-384 is C-loop; the sequence is TPSDPNPNDPRARMDSESLFKDGKLLPAI.

The protein belongs to the transferase hexapeptide repeat family. Component of the GMPPA-GMPPB mannose-1-phosphate guanylyltransferase complex composed of 4 GMPPA subunits and 8 GMPPB subunits; the complex is organized into three layers, a central layer made up of 2 GMPPA dimers sandwiched between two layers each made up of 2 GMPPB dimers. In terms of tissue distribution, expressed in fibroblasts (at protein level).

The protein localises to the cytoplasm. Functionally, regulatory subunit of the GMPPA-GMPPB mannose-1-phosphate guanylyltransferase complex; reduces the catalytic activity of GMPPB when part of the complex. Mediates allosteric feedback inhibition of GMPPB catalytic activity upon binding GDP-alpha-D-mannose. Together with GMPPB regulates GDP-alpha-D-mannose levels. The protein is Mannose-1-phosphate guanylyltransferase regulatory subunit alpha of Homo sapiens (Human).